The primary structure comprises 101 residues: Small ribosomal subunit protein bS16 (101 aa).

It belongs to the bacterial ribosomal protein bS16 family.

This is Small ribosomal subunit protein bS16 from Ureaplasma parvum serovar 3 (strain ATCC 700970).